A 199-amino-acid chain; its full sequence is N-(5'-phosphoribosyl)anthranilate isomerase (199 aa).

It belongs to the TrpF family.

It catalyses the reaction N-(5-phospho-beta-D-ribosyl)anthranilate = 1-(2-carboxyphenylamino)-1-deoxy-D-ribulose 5-phosphate. Its pathway is amino-acid biosynthesis; L-tryptophan biosynthesis; L-tryptophan from chorismate: step 3/5. This chain is N-(5'-phosphoribosyl)anthranilate isomerase, found in Solibacter usitatus (strain Ellin6076).